Consider the following 295-residue polypeptide: Cytidine deaminase (295 aa).

CMP/dCMP-type deaminase domains lie at 48 to 168 (TDNQ…FGPS) and 187 to 295 (EDDD…YLSL). Residue 89-91 (NME) coordinates substrate. Histidine 102 is a Zn(2+) binding site. Glutamate 104 (proton donor) is an active-site residue. Zn(2+) is bound by residues cysteine 129 and cysteine 132.

The protein belongs to the cytidine and deoxycytidylate deaminase family. Homodimer. The cofactor is Zn(2+).

The catalysed reaction is cytidine + H2O + H(+) = uridine + NH4(+). It catalyses the reaction 2'-deoxycytidine + H2O + H(+) = 2'-deoxyuridine + NH4(+). In terms of biological role, this enzyme scavenges exogenous and endogenous cytidine and 2'-deoxycytidine for UMP synthesis. This is Cytidine deaminase from Vibrio vulnificus (strain YJ016).